Reading from the N-terminus, the 84-residue chain is Small ribosomal subunit protein uS17 (84 aa).

The protein belongs to the universal ribosomal protein uS17 family. As to quaternary structure, part of the 30S ribosomal subunit.

Functionally, one of the primary rRNA binding proteins, it binds specifically to the 5'-end of 16S ribosomal RNA. In Borreliella burgdorferi (strain ATCC 35210 / DSM 4680 / CIP 102532 / B31) (Borrelia burgdorferi), this protein is Small ribosomal subunit protein uS17.